We begin with the raw amino-acid sequence, 444 residues long: MSGTKLEDSPPCRNWSSAPELNETQEPFLNPTDYDDEEFLRYLWREYLHPKEYEWVLIAGYIIVFVVALIGNVLVCVAVWKNHHMRTVTNYFIVNLSLADVLVTITCLPATLVVDITETWFFGQSLCKVIPYLQTVSVSVSVLTLSCIALDRWYAICHPLMFKSTAKRARNSIVIIWIVSCIIMIPQAIVMECSTMLPGLANKTTLFTVCDERWGGEIYPKMYHICFFLVTYMAPLCLMVLAYLQIFRKLWCRQIPGTSSVVQRKWKPLQPVSQPRGPGQQTKSRISAVAAEIKQIRARRKTARMLMVVLLVFAICYLPISILNVLKRVFGMFTHTEDRETVYAWFTFSHWLVYANSAANPIIYNFLSGKFREEFKAAFSCCCLGVHHRQEDRLARGRTSTESRKSLTTQISNFDNISKLSEQVLLTSMSTLPAANGAGQLQNW.

A compositionally biased stretch (basic and acidic residues) spans 1-10 (MSGTKLEDSP). The tract at residues 1–30 (MSGTKLEDSPPCRNWSSAPELNETQEPFLN) is disordered. Residues 1–54 (MSGTKLEDSPPCRNWSSAPELNETQEPFLNPTDYDDEEFLRYLWREYLHPKEYE) are Extracellular-facing. N14 and N22 each carry an N-linked (GlcNAc...) asparagine glycan. A compositionally biased stretch (polar residues) spans 14-27 (NWSSAPELNETQEP). The required for response to orexin-A stretch occupies residues 33-49 (DYDDEEFLRYLWREYLH). The chain crosses the membrane as a helical span at residues 55 to 75 (WVLIAGYIIVFVVALIGNVLV). The Cytoplasmic segment spans residues 76-88 (CVAVWKNHHMRTV). Residues 89-110 (TNYFIVNLSLADVLVTITCLPA) form a helical membrane-spanning segment. Topologically, residues 111 to 127 (TLVVDITETWFFGQSLC) are extracellular. A disulfide bridge links C127 with C210. The helical transmembrane segment at 128-150 (KVIPYLQTVSVSVSVLTLSCIAL) threads the bilayer. Over 151-170 (DRWYAICHPLMFKSTAKRAR) the chain is Cytoplasmic. A helical membrane pass occupies residues 171 to 191 (NSIVIIWIVSCIIMIPQAIVM). Topologically, residues 192 to 222 (ECSTMLPGLANKTTLFTVCDERWGGEIYPKM) are extracellular. N202 is a glycosylation site (N-linked (GlcNAc...) asparagine). The chain crosses the membrane as a helical span at residues 223–243 (YHICFFLVTYMAPLCLMVLAY). The Cytoplasmic segment spans residues 244-304 (LQIFRKLWCR…QIRARRKTAR (61 aa)). The helical transmembrane segment at 305-326 (MLMVVLLVFAICYLPISILNVL) threads the bilayer. Over 327–342 (KRVFGMFTHTEDRETV) the chain is Extracellular. The helical transmembrane segment at 343-366 (YAWFTFSHWLVYANSAANPIIYNF) threads the bilayer. Residues 367–444 (LSGKFREEFK…ANGAGQLQNW (78 aa)) are Cytoplasmic-facing.

The protein belongs to the G-protein coupled receptor 1 family.

It is found in the cell membrane. Its function is as follows. Nonselective, high-affinity receptor for both orexin-A and orexin-B neuropeptides. Triggers an increase in cytoplasmic Ca(2+) levels in response to orexin-A binding. The polypeptide is Orexin receptor type 2 (HCRTR2) (Sus scrofa (Pig)).